Consider the following 337-residue polypeptide: tRNA N6-adenosine threonylcarbamoyltransferase (337 aa).

Histidine 110 and histidine 114 together coordinate Fe cation. Substrate is bound by residues 132–136 (VVSGG), aspartate 165, glycine 178, aspartate 182, and asparagine 268. Aspartate 293 serves as a coordination point for Fe cation.

The protein belongs to the KAE1 / TsaD family. It depends on Fe(2+) as a cofactor.

It localises to the cytoplasm. It catalyses the reaction L-threonylcarbamoyladenylate + adenosine(37) in tRNA = N(6)-L-threonylcarbamoyladenosine(37) in tRNA + AMP + H(+). Its function is as follows. Required for the formation of a threonylcarbamoyl group on adenosine at position 37 (t(6)A37) in tRNAs that read codons beginning with adenine. Is involved in the transfer of the threonylcarbamoyl moiety of threonylcarbamoyl-AMP (TC-AMP) to the N6 group of A37, together with TsaE and TsaB. TsaD likely plays a direct catalytic role in this reaction. This is tRNA N6-adenosine threonylcarbamoyltransferase from Sulfurihydrogenibium sp. (strain YO3AOP1).